Reading from the N-terminus, the 154-residue chain is MGLSDGEWQLVLTVWGKVEADLAGHGQEVLIRLFKNHPETLEKFDKFKNLKSEDEMKGSDDLKKHGNTVLSALGGILKKKGQHEAELKPLAQSHATKHKIPVKYLEFISEAIIQVLQSKHPGDFGADAQGAMSKALELFRNDMAAKYKELGFHG.

The region spanning 2 to 148 (GLSDGEWQLV…FRNDMAAKYK (147 aa)) is the Globin domain. The residue at position 4 (S4) is a Phosphoserine. H65 contacts nitrite. Residue H65 coordinates O2. Phosphothreonine is present on T68. H94 contacts heme b.

The protein belongs to the globin family. In terms of assembly, monomeric.

It is found in the cytoplasm. It localises to the sarcoplasm. The enzyme catalyses Fe(III)-heme b-[protein] + nitric oxide + H2O = Fe(II)-heme b-[protein] + nitrite + 2 H(+). The catalysed reaction is H2O2 + AH2 = A + 2 H2O. Monomeric heme protein which primary function is to store oxygen and facilitate its diffusion within muscle tissues. Reversibly binds oxygen through a pentacoordinated heme iron and enables its timely and efficient release as needed during periods of heightened demand. Depending on the oxidative conditions of tissues and cells, and in addition to its ability to bind oxygen, it also has a nitrite reductase activity whereby it regulates the production of bioactive nitric oxide. Under stress conditions, like hypoxia and anoxia, it also protects cells against reactive oxygen species thanks to its pseudoperoxidase activity. The polypeptide is Myoglobin (MB) (Ochotona curzoniae (Black-lipped pika)).